The following is a 193-amino-acid chain: Adenine phosphoribosyltransferase (193 aa).

It belongs to the purine/pyrimidine phosphoribosyltransferase family. Homodimer.

The protein resides in the cytoplasm. The enzyme catalyses AMP + diphosphate = 5-phospho-alpha-D-ribose 1-diphosphate + adenine. It participates in purine metabolism; AMP biosynthesis via salvage pathway; AMP from adenine: step 1/1. Catalyzes a salvage reaction resulting in the formation of AMP, that is energically less costly than de novo synthesis. The protein is Adenine phosphoribosyltransferase of Bifidobacterium longum (strain DJO10A).